Reading from the N-terminus, the 588-residue chain is Calcium/calmodulin-dependent protein kinase kinase 2 (588 aa).

The span at 1–11 shows a compositional bias: polar residues; that stretch reads MSSCVSSQPTS. Disordered stretches follow at residues 1 to 34 and 64 to 147; these read MSSC…KPCE and DLNL…PTVE. S2 is modified (N-acetylserine). Residues S99, S114, S129, S133, and S137 each carry the phosphoserine modification. Residues 101-116 show a composition bias toward polar residues; that stretch reads QEPSQGGPASSSNSLD. Over residues 124–139 the composition is skewed to low complexity; that stretch reads PSLSYSPASSPQSSPR. In terms of domain architecture, Protein kinase spans 165-446; sequence YTLKDEIGKG…VPEIKLHPWV (282 aa). ATP is bound by residues 171–179 and K194; that span reads IGKGSYGVV. The segment at 204–226 is RP domain; that stretch reads QAGFPRRPPPRGARPAPGGCIQP. Residues 205–225 are disordered; the sequence is AGFPRRPPPRGARPAPGGCIQ. Catalysis depends on D312, which acts as the Proton acceptor. The autoinhibitory domain stretch occupies residues 472 to 477; the sequence is ENSVKH. The calmodulin-binding stretch occupies residues 475–500; sequence VKHIPSLATVILVKTMIRKRSFGNPF. Phosphoserine occurs at positions 495, 511, 522, and 572. Residues 497 to 588 are disordered; it reads GNPFEGSRRE…LQPEEVMEPE (92 aa). A compositionally biased stretch (basic and acidic residues) spans 521 to 536; sequence PTREWEPLSEPKEARQ. Residues 570 to 580 show a composition bias toward pro residues; the sequence is PGSPPRMPPLQ.

Belongs to the protein kinase superfamily. Ser/Thr protein kinase family. Interacts with calmodulin. Post-translationally, autophosphorylated and phosphorylated by PKA. Each isoform may show a different pattern of phosphorylation. As to expression, expressed in all tissues tested. A differential expression pattern compared to CAMKK1 is observed in the brain.

It localises to the nucleus. It is found in the cytoplasm. The protein resides in the cell projection. Its subcellular location is the neuron projection. The catalysed reaction is L-seryl-[protein] + ATP = O-phospho-L-seryl-[protein] + ADP + H(+). The enzyme catalyses L-threonyl-[protein] + ATP = O-phospho-L-threonyl-[protein] + ADP + H(+). Its activity is regulated as follows. Activated by Ca(2+)/calmodulin. Binding of calmodulin may relieve intrasteric autoinhibition. Autophosphorylation does not alter activity or regulation by Ca(2+)/calmodulin. In part, activity is independent on Ca(2+)/calmodulin. In terms of biological role, calcium/calmodulin-dependent protein kinase belonging to a proposed calcium-triggered signaling cascade involved in a number of cellular processes. Phosphorylates CAMK1, CAMK4 and CAMK1D. Efficiently phosphorylates 5'-AMP-activated protein kinase (AMPK) trimer, including that consisting of PRKAA1, PRKAB1 and PRKAG1. This phosphorylation is stimulated in response to Ca(2+) signals. May play a role in neurite growth. Isoform 2 may promote neurite elongation, while isoform 1 may promoter neurite branching. May be involved in hippocampal activation of CREB1. This is Calcium/calmodulin-dependent protein kinase kinase 2 (Camkk2) from Mus musculus (Mouse).